We begin with the raw amino-acid sequence, 466 residues long: Soluble pyridine nucleotide transhydrogenase (466 aa).

Residue 36-45 (ERYHNVGGGC) participates in FAD binding.

Belongs to the class-I pyridine nucleotide-disulfide oxidoreductase family. FAD is required as a cofactor.

Its subcellular location is the cytoplasm. It catalyses the reaction NAD(+) + NADPH = NADH + NADP(+). In terms of biological role, conversion of NADPH, generated by peripheral catabolic pathways, to NADH, which can enter the respiratory chain for energy generation. The sequence is that of Soluble pyridine nucleotide transhydrogenase from Salmonella paratyphi A (strain ATCC 9150 / SARB42).